Consider the following 205-residue polypeptide: Large ribosomal subunit protein uL4 (205 aa).

Residues K48–S79 form a disordered region.

This sequence belongs to the universal ribosomal protein uL4 family. Part of the 50S ribosomal subunit.

Functionally, one of the primary rRNA binding proteins, this protein initially binds near the 5'-end of the 23S rRNA. It is important during the early stages of 50S assembly. It makes multiple contacts with different domains of the 23S rRNA in the assembled 50S subunit and ribosome. Forms part of the polypeptide exit tunnel. The polypeptide is Large ribosomal subunit protein uL4 (Methylococcus capsulatus (strain ATCC 33009 / NCIMB 11132 / Bath)).